A 208-amino-acid polypeptide reads, in one-letter code: Outer-membrane lipoprotein carrier protein (208 aa).

An N-terminal signal peptide occupies residues 1–22; sequence MRKTLSILAISLPLLVSGYAQA.

This sequence belongs to the LolA family. In terms of assembly, monomer.

Its subcellular location is the periplasm. Its function is as follows. Participates in the translocation of lipoproteins from the inner membrane to the outer membrane. Only forms a complex with a lipoprotein if the residue after the N-terminal Cys is not an aspartate (The Asp acts as a targeting signal to indicate that the lipoprotein should stay in the inner membrane). The chain is Outer-membrane lipoprotein carrier protein from Shewanella sediminis (strain HAW-EB3).